We begin with the raw amino-acid sequence, 222 residues long: DNA ADP-ribosyl transferase (222 aa).

The 198-residue stretch at 12–209 (TLIYHITHLN…PVRVRRSWYY (198 aa)) folds into the DarT domain. NAD(+)-binding positions include 16 to 18 (HIT), Gly25, and Leu33. The NAD(+)-binding element stretch occupies residues 38–56 (RPPTQQNVAYGHIQAHRAQ). The DNA-binding element occupies 47-53 (YGHIQAH). Arg54 is an NAD(+) binding site. Catalysis depends on Arg54, which acts as the Proton acceptor. 3 DNA-binding regions span residues 78–83 (RSPMLY), 148–151 (SYWA), and 154–158 (REKKQ). Residues 119–160 (TDRHAAVQYVCFFHKLEHLKALDWQAIQASYWANVREKKQAE) form an ADP-ribosylating turn-turn loop region. Glu160 is an active-site residue.

Belongs to the DarT ADP-ribosyltransferase family. In terms of assembly, interacts with cognate antitoxin DarG (via C-terminus); this heterodimeric complex neutralizes the toxic effect of DarT by preventing ssDNA binding to DarT and consequently inactivating the toxin by direct protein-protein interactions.

It carries out the reaction a thymidine in DNA + NAD(+) = an N-(ADP-alpha-D-ribosyl)-thymidine in DNA + nicotinamide + H(+). Toxic component of the hybrid type II/IV toxin-antitoxin (TA) system DarTG, which plays a crucial role in controlling bacterial growth and bacteriophage infection. Its toxic effect is neutralized by cognate antitoxin DarG. In case of phage infection, DarT toxin ADP-ribosylates DNA, which inhibits both viral DNA and RNA synthesis and leads to abortive infection. ADP-ribosylates ssDNA on the second thymidine of the consensus sequence 5'-TNTC-3'; the protein does not auto-modify. Has no activity on dsDNA in vitro. This leads to a decrease in DNA replication. Upon expression in E.coli inhibits cell growth, colony formation and induces the SOS response. Expression leads to bacteriostasis; however if cells grow over an hour in the presence of toxin, growth is no longer restored on antitoxin-inducing plates. In E.coli ADP-ribosylates genomic DNA (gDNA), which induces RecA expression (a marker for DNA damage). The chain is DNA ADP-ribosyl transferase from Thermus aquaticus (strain ATCC BAA-2747 / Y51MC23).